Here is a 469-residue protein sequence, read N- to C-terminus: Glutamate--tRNA ligase (469 aa).

The 'HIGH' region motif lies at 9 to 19 (PSPTGFLHVGG). Residues cysteine 98, cysteine 100, cysteine 125, and aspartate 127 each contribute to the Zn(2+) site. The 'KMSKS' region signature appears at 236-240 (KLSKR). Lysine 239 serves as a coordination point for ATP.

The protein belongs to the class-I aminoacyl-tRNA synthetase family. Glutamate--tRNA ligase type 1 subfamily. As to quaternary structure, monomer. It depends on Zn(2+) as a cofactor.

The protein localises to the cytoplasm. It catalyses the reaction tRNA(Glu) + L-glutamate + ATP = L-glutamyl-tRNA(Glu) + AMP + diphosphate. Catalyzes the attachment of glutamate to tRNA(Glu) in a two-step reaction: glutamate is first activated by ATP to form Glu-AMP and then transferred to the acceptor end of tRNA(Glu). This Shewanella sp. (strain W3-18-1) protein is Glutamate--tRNA ligase.